The chain runs to 377 residues: MKAKTITVKLDKCCYDIIIGSDLIAQAALQIKSFFHQKGPHQKRLAIVTDTNVAALHLETLQAGLSANQIHTIPIIVEAGEQSKSFPVLQTIIDKILAARLERGDSIIAFGGGVIGDLGGFAASIIRRGMHFIQMPTTLLAQIDSSIGGKTGINSQYGKNLIGSFYQPQCVITDTCVLDTLPLREFRAGYAEMVKYGLINQPHFFEWLEKNQKEIFSSGPTRVEAIARSCQFKADIVARDEYEAGERALLNLGHTFGHMLETATAYNANRLIHGEAVAIGMILAYQFSAQLNLISPMLVQRVETHLKAAGLPTQLQDIPGELPNAEMLMTFIAQDKKVSNNRLTFILTHGLGQSFIAKDVASDAVLTFLKQKFTKTH.

NAD(+) contacts are provided by residues Gly113 to Asp117, Thr137 to Thr138, Lys150, and Lys159. Glu192, His254, and His273 together coordinate Zn(2+).

It belongs to the sugar phosphate cyclases superfamily. Dehydroquinate synthase family. The cofactor is Co(2+). Zn(2+) is required as a cofactor. It depends on NAD(+) as a cofactor.

It is found in the cytoplasm. The enzyme catalyses 7-phospho-2-dehydro-3-deoxy-D-arabino-heptonate = 3-dehydroquinate + phosphate. It participates in metabolic intermediate biosynthesis; chorismate biosynthesis; chorismate from D-erythrose 4-phosphate and phosphoenolpyruvate: step 2/7. In terms of biological role, catalyzes the conversion of 3-deoxy-D-arabino-heptulosonate 7-phosphate (DAHP) to dehydroquinate (DHQ). In Bartonella bacilliformis (strain ATCC 35685 / KC583 / Herrer 020/F12,63), this protein is 3-dehydroquinate synthase.